The primary structure comprises 229 residues: Phosphoglycolate phosphatase (229 aa).

Asp18 acts as the Nucleophile in catalysis. Residues Asp18, Asp20, and Asp176 each contribute to the Mg(2+) site.

The protein belongs to the HAD-like hydrolase superfamily. CbbY/CbbZ/Gph/YieH family. Mg(2+) is required as a cofactor.

It carries out the reaction 2-phosphoglycolate + H2O = glycolate + phosphate. Its pathway is organic acid metabolism; glycolate biosynthesis; glycolate from 2-phosphoglycolate: step 1/1. Its function is as follows. Specifically catalyzes the dephosphorylation of 2-phosphoglycolate. Is involved in the dissimilation of the intracellular 2-phosphoglycolate formed during the DNA repair of 3'-phosphoglycolate ends, a major class of DNA lesions induced by oxidative stress. The polypeptide is Phosphoglycolate phosphatase (Xylella fastidiosa (strain 9a5c)).